The following is a 264-amino-acid chain: Glutamate racemase (264 aa).

Substrate-binding positions include 10–11 and 42–43; these read DS and YG. Cysteine 73 acts as the Proton donor/acceptor in catalysis. 74 to 75 is a binding site for substrate; the sequence is NT. The active-site Proton donor/acceptor is the cysteine 183. 184-185 contacts substrate; the sequence is TH.

The protein belongs to the aspartate/glutamate racemases family.

It carries out the reaction L-glutamate = D-glutamate. Its pathway is cell wall biogenesis; peptidoglycan biosynthesis. Its function is as follows. Provides the (R)-glutamate required for cell wall biosynthesis. The protein is Glutamate racemase of Streptococcus pneumoniae (strain ATCC BAA-255 / R6).